The sequence spans 179 residues: ATP-dependent protease subunit HslV (179 aa).

Thr-5 is an active-site residue. Na(+)-binding residues include Gly-164, Cys-167, and Thr-170.

The protein belongs to the peptidase T1B family. HslV subfamily. A double ring-shaped homohexamer of HslV is capped on each side by a ring-shaped HslU homohexamer. The assembly of the HslU/HslV complex is dependent on binding of ATP.

The protein localises to the cytoplasm. It catalyses the reaction ATP-dependent cleavage of peptide bonds with broad specificity.. With respect to regulation, allosterically activated by HslU binding. Protease subunit of a proteasome-like degradation complex believed to be a general protein degrading machinery. The polypeptide is ATP-dependent protease subunit HslV (Verminephrobacter eiseniae (strain EF01-2)).